A 3620-amino-acid chain; its full sequence is Cubilin (3620 aa).

Residues 1-20 (MSSPFLWSLIILLTFAESNG) form the signal peptide. A propeptide spans 21–32 (EAGGFELQRQKR) (removed in mature form). Residues 39 to 46 (PRMATERG) form an interaction with AMN region. The N-linked (GlcNAc...) asparagine glycan is linked to asparagine 102. One can recognise an EGF-like 1 domain in the interval 129–165 (DKKVCSSNPCQNGGTCLNLHDSFFCICPSQWKGPLCS). Intrachain disulfides connect cysteine 133–cysteine 144, cysteine 138–cysteine 153, cysteine 155–cysteine 164, cysteine 171–cysteine 187, cysteine 181–cysteine 196, and cysteine 198–cysteine 207. An EGF-like 2; calcium-binding domain is found at 167–208 (DVNECQIYSGTPLGCQNGATCENTAGSYSCLCSPETHGPQCA). An N-linked (GlcNAc...) asparagine glycan is attached at asparagine 253. The region spanning 260-301 (DIDECNLQHAPCSPLVQCFNTQGSFYCGACPTGWQGNGYSCQ) is the EGF-like 3; calcium-binding domain. Disulfide bonds link cysteine 264/cysteine 277, cysteine 271/cysteine 286, cysteine 289/cysteine 300, cysteine 306/cysteine 321, cysteine 313/cysteine 330, cysteine 333/cysteine 344, cysteine 350/cysteine 363, cysteine 357/cysteine 373, cysteine 396/cysteine 406, cysteine 401/cysteine 415, cysteine 417/cysteine 426, cysteine 433/cysteine 444, cysteine 438/cysteine 453, cysteine 455/cysteine 464, cysteine 471/cysteine 497, cysteine 524/cysteine 546, cysteine 587/cysteine 613, cysteine 640/cysteine 662, and cysteine 705/cysteine 730. The 44-residue stretch at 302–345 (DIDECKINNGGCSVVPPVMCVNTLGSYHCQACPPGYQGDGRVCT) folds into the EGF-like 4; calcium-binding domain. 2 consecutive EGF-like domains span residues 346-382 (VIDI…YTGN) and 392-427 (LSDT…INCT). Residue asparagine 425 is glycosylated (N-linked (GlcNAc...) asparagine). The EGF-like 7; calcium-binding domain maps to 429-465 (NINECLSNPCFNGGTCVDGVNAFSCECTRFWTGFLCQ). 13 CUB domains span residues 471–583 (CGGS…WETQ), 587–699 (CGGI…YLTS), 705–812 (CGGN…YQVA), 813–924 (CGGE…FSAA), 928–1038 (CGEI…YEAT), 1044–1158 (CMED…WDGS), 1162–1274 (CGGN…YQQT), 1275–1386 (CRNV…WFIH), 1388–1503 (CGGE…WQAV), 1507–1616 (CGGI…FNQV), 1617–1731 (CGGH…YAAS), 1735–1847 (CGGT…FTKI), and 1849–1960 (GNDN…WFAV). Residues asparagine 708 and asparagine 745 are each glycosylated (N-linked (GlcNAc...) asparagine). The cysteines at positions 757 and 775 are disulfide-linked. N-linked (GlcNAc...) asparagine glycosylation is present at asparagine 777. Cysteine 813 and cysteine 838 are oxidised to a cystine. N-linked (GlcNAc...) asparagine glycosylation is present at asparagine 853. Intrachain disulfides connect cysteine 865-cysteine 887 and cysteine 928-cysteine 954. A glycan (N-linked (GlcNAc...) asparagine) is linked at asparagine 953. A Ca(2+)-binding site is contributed by glutamate 976. N-linked (GlcNAc...) asparagine glycosylation is present at asparagine 980. A disulfide bridge links cysteine 981 with cysteine 1001. Aspartate 984, aspartate 1023, aspartate 1025, and leucine 1026 together coordinate Ca(2+). Cysteine 1044 and cysteine 1070 are oxidised to a cystine. Ca(2+) is bound by residues glutamate 1092, aspartate 1102, and aspartate 1143. Cysteine 1099 and cysteine 1121 form a disulfide bridge. Cysteines 1162 and 1188 form a disulfide. Asparagine 1165 carries N-linked (GlcNAc...) asparagine glycosylation. Ca(2+) is bound at residue glutamate 1210. Asparagine 1214 carries N-linked (GlcNAc...) asparagine glycosylation. A disulfide bridge links cysteine 1215 with cysteine 1237. Residues aspartate 1218, aspartate 1259, and glutamine 1262 each contribute to the Ca(2+) site. Cysteine 1275 and cysteine 1303 form a disulfide bridge. N-linked (GlcNAc...) asparagine glycans are attached at residues asparagine 1304 and asparagine 1316. Residue glutamate 1325 participates in Ca(2+) binding. Asparagine 1329 carries an N-linked (GlcNAc...) asparagine glycan. A disulfide bridge connects residues cysteine 1330 and cysteine 1348. Residues aspartate 1333, aspartate 1370, and valine 1372 each contribute to the Ca(2+) site. Cystine bridges form between cysteine 1388–cysteine 1414 and cysteine 1441–cysteine 1463. Asparagine 1497 carries an N-linked (GlcNAc...) asparagine glycan. The cysteines at positions 1507 and 1533 are disulfide-linked. N-linked (GlcNAc...) asparagine glycosylation occurs at asparagine 1548. 5 cysteine pairs are disulfide-bonded: cysteine 1560/cysteine 1578, cysteine 1617/cysteine 1644, cysteine 1672/cysteine 1694, cysteine 1735/cysteine 1761, and cysteine 1788/cysteine 1809. A glycan (N-linked (GlcNAc...) asparagine) is linked at asparagine 1643. 3 N-linked (GlcNAc...) asparagine glycosylation sites follow: asparagine 1799, asparagine 1816, and asparagine 1882. A disulfide bridge connects residues cysteine 1902 and cysteine 1924. Asparagine 1961 carries an N-linked (GlcNAc...) asparagine glycan. 2 cysteine pairs are disulfide-bonded: cysteine 1975/cysteine 2003 and cysteine 2029/cysteine 2051. CUB domains lie at 1975 to 2088 (CGGF…FHKS), 2089 to 2210 (CGGY…YEAK), 2214 to 2331 (CGGN…YAIA), 2333 to 2445 (CGGR…FESS), 2449 to 2562 (CGGE…YTSS), 2567 to 2684 (CGGS…YSFT), 2686 to 2798 (CGGI…WNTQ), 2802 to 2916 (CGGI…FVSR), 2917 to 3032 (CGGN…YKIT), 3034 to 3147 (CGGV…FQQT), 3154 to 3271 (CGGY…YTTV), 3275 to 3392 (CGGT…IAGC), 3392 to 3504 (CNRE…WTSS), and 3508 to 3620 (CGGT…TWDS). 2 N-linked (GlcNAc...) asparagine glycosylation sites follow: asparagine 2082 and asparagine 2114. 3 disulfides stabilise this stretch: cysteine 2089-cysteine 2115, cysteine 2214-cysteine 2244, and cysteine 2272-cysteine 2294. An N-linked (GlcNAc...) asparagine glycan is attached at asparagine 2317. The cysteines at positions 2333 and 2360 are disulfide-linked. 2 N-linked (GlcNAc...) asparagine glycosylation sites follow: asparagine 2383 and asparagine 2397. Cystine bridges form between cysteine 2387–cysteine 2408, cysteine 2449–cysteine 2475, and cysteine 2502–cysteine 2524. Asparagine 2528, asparagine 2578, asparagine 2589, and asparagine 2607 each carry an N-linked (GlcNAc...) asparagine glycan. Cysteine 2567 and cysteine 2596 form a disulfide bridge. 7 disulfide bridges follow: cysteine 2625–cysteine 2646, cysteine 2686–cysteine 2712, cysteine 2739–cysteine 2761, cysteine 2802–cysteine 2828, cysteine 2857–cysteine 2880, cysteine 2917–cysteine 2943, and cysteine 2974–cysteine 2996. Residue asparagine 2810 is glycosylated (N-linked (GlcNAc...) asparagine). Asparagine 2920, asparagine 2942, and asparagine 2986 each carry an N-linked (GlcNAc...) asparagine glycan. A Phosphothreonine modification is found at threonine 3005. 2 disulfides stabilise this stretch: cysteine 3034–cysteine 3061 and cysteine 3088–cysteine 3110. Residues asparagine 3039, asparagine 3100, and asparagine 3122 are each glycosylated (N-linked (GlcNAc...) asparagine). 2 disulfide bridges follow: cysteine 3154–cysteine 3182 and cysteine 3212–cysteine 3234. N-linked (GlcNAc...) asparagine glycans are attached at residues asparagine 3265, asparagine 3280, and asparagine 3292. 2 disulfide bridges follow: cysteine 3275–cysteine 3303 and cysteine 3329–cysteine 3351. A glycan (N-linked (GlcNAc...) asparagine) is linked at asparagine 3354. Cysteines 3392 and 3418 form a disulfide. N-linked (GlcNAc...) asparagine glycosylation is found at asparagine 3427, asparagine 3454, and asparagine 3530. Cystine bridges form between cysteine 3445–cysteine 3467, cysteine 3508–cysteine 3534, and cysteine 3561–cysteine 3583.

In terms of assembly, interacts with AMN. Component of the cubam complex composed of one CUBN trimer and one AMN chain. The cubam complex can dimerize. Interacts with LRP2 in a dual-receptor complex in a calcium-dependent manner. Found in a complex with PID1/PCLI1, LRP1 and CUBNI. Interacts with LRP1 and PID1/PCLI1. The precursor is cleaved by a trans-Golgi proteinase furin, removing a propeptide. In terms of processing, N-glycosylated. In terms of tissue distribution, detected in kidney cortex (at protein level). Detected in kidney, duodenum and jejunum.

The protein localises to the apical cell membrane. It localises to the cell membrane. The protein resides in the membrane. Its subcellular location is the coated pit. It is found in the endosome. The protein localises to the lysosome membrane. Functionally, endocytic receptor which plays a role in lipoprotein, vitamin and iron metabolism by facilitating their uptake. Acts together with LRP2 to mediate endocytosis of high-density lipoproteins, GC, hemoglobin, ALB, TF and SCGB1A1. Acts together with AMN to mediate endocytosis of the CBLIF-cobalamin complex. Binds to ALB, MB, Kappa and lambda-light chains, TF, hemoglobin, GC, SCGB1A1, APOA1, high density lipoprotein, and the CBLIF-cobalamin complex. Ligand binding requires calcium. Serves as important transporter in several absorptive epithelia, including intestine, renal proximal tubules and embryonic yolk sac. May play an important role in the development of the peri-implantation embryo through internalization of APOA1 and cholesterol. Binds to LGALS3 at the maternal-fetal interface. This is Cubilin (CUBN) from Canis lupus familiaris (Dog).